Here is a 238-residue protein sequence, read N- to C-terminus: Leucyl/phenylalanyl-tRNA--protein transferase (238 aa).

The protein belongs to the L/F-transferase family.

The protein localises to the cytoplasm. The enzyme catalyses N-terminal L-lysyl-[protein] + L-leucyl-tRNA(Leu) = N-terminal L-leucyl-L-lysyl-[protein] + tRNA(Leu) + H(+). It catalyses the reaction N-terminal L-arginyl-[protein] + L-leucyl-tRNA(Leu) = N-terminal L-leucyl-L-arginyl-[protein] + tRNA(Leu) + H(+). The catalysed reaction is L-phenylalanyl-tRNA(Phe) + an N-terminal L-alpha-aminoacyl-[protein] = an N-terminal L-phenylalanyl-L-alpha-aminoacyl-[protein] + tRNA(Phe). Functions in the N-end rule pathway of protein degradation where it conjugates Leu, Phe and, less efficiently, Met from aminoacyl-tRNAs to the N-termini of proteins containing an N-terminal arginine or lysine. This is Leucyl/phenylalanyl-tRNA--protein transferase from Psychromonas ingrahamii (strain DSM 17664 / CCUG 51855 / 37).